The chain runs to 102 residues: MYAIIETGGKQIKVEEGQEIYVEKLDAEAGEEVSFDKVLFVGGESAKVGAPFVEGASVTGTVEKHGRNKKIIVYKMKAKKNYRRKQGHRQPYTKVVIGKING.

This sequence belongs to the bacterial ribosomal protein bL21 family. In terms of assembly, part of the 50S ribosomal subunit. Contacts protein L20.

This protein binds to 23S rRNA in the presence of protein L20. The protein is Large ribosomal subunit protein bL21 of Shouchella clausii (strain KSM-K16) (Alkalihalobacillus clausii).